The sequence spans 175 residues: uncharacterized protein (175 aa).

A run of 5 helical transmembrane segments spans residues 25–45 (MIAI…TTIS), 46–66 (ATGP…FFLL), 97–117 (FAGW…LTAV), 124–144 (WLPG…LTLL), and 155–175 (TEFW…VTGI).

This sequence belongs to the amino acid-polyamine-organocation (APC) superfamily.

It is found in the cell membrane. This is an uncharacterized protein from Lactobacillus delbrueckii subsp. lactis.